The primary structure comprises 370 residues: Anhydro-N-acetylmuramic acid kinase (370 aa).

13–20 (GTSMDGVD) lines the ATP pocket.

The protein belongs to the anhydro-N-acetylmuramic acid kinase family.

The enzyme catalyses 1,6-anhydro-N-acetyl-beta-muramate + ATP + H2O = N-acetyl-D-muramate 6-phosphate + ADP + H(+). Its pathway is amino-sugar metabolism; 1,6-anhydro-N-acetylmuramate degradation. The protein operates within cell wall biogenesis; peptidoglycan recycling. Functionally, catalyzes the specific phosphorylation of 1,6-anhydro-N-acetylmuramic acid (anhMurNAc) with the simultaneous cleavage of the 1,6-anhydro ring, generating MurNAc-6-P. Is required for the utilization of anhMurNAc either imported from the medium or derived from its own cell wall murein, and thus plays a role in cell wall recycling. This is Anhydro-N-acetylmuramic acid kinase from Vibrio vulnificus (strain CMCP6).